The chain runs to 307 residues: Tyrosine recombinase XerC (307 aa).

Positions 6-89 constitute a Core-binding (CB) domain; that stretch reads HNTLQTVNTF…TLRTFFRYLM (84 aa). The region spanning 110–293 is the Tyr recombinase domain; the sequence is RLPKALDVDQ…DFQHLAQVYD (184 aa). Residues Arg151, Lys175, His245, Arg248, and His271 contribute to the active site. Tyr280 serves as the catalytic O-(3'-phospho-DNA)-tyrosine intermediate.

The protein belongs to the 'phage' integrase family. XerC subfamily. Forms a cyclic heterotetrameric complex composed of two molecules of XerC and two molecules of XerD.

It localises to the cytoplasm. In terms of biological role, site-specific tyrosine recombinase, which acts by catalyzing the cutting and rejoining of the recombining DNA molecules. The XerC-XerD complex is essential to convert dimers of the bacterial chromosome into monomers to permit their segregation at cell division. It also contributes to the segregational stability of plasmids. The polypeptide is Tyrosine recombinase XerC (Alcanivorax borkumensis (strain ATCC 700651 / DSM 11573 / NCIMB 13689 / SK2)).